A 344-amino-acid polypeptide reads, in one-letter code: Galactinol synthase 1 (344 aa).

Lys111 is an active-site residue. The Mn(2+) site is built by Asp127, Asp129, and His265.

It belongs to the glycosyltransferase 8 family. Galactosyltransferase subfamily. A divalent metal cation serves as cofactor. Accumulates in mature seeds. Expressed in seedlings (axes and cotyledons), meristems, vascular tissues and emerging lateral roots. Present in abscission zones.

It is found in the cytoplasm. The enzyme catalyses myo-inositol + UDP-alpha-D-galactose = alpha-D-galactosyl-(1-&gt;3)-1D-myo-inositol + UDP + H(+). Functionally, galactinol synthase involved in the biosynthesis of raffinose family oligosaccharides (RFOs) that function as osmoprotectants. Promotes plant stress tolerance such as heat, chilling, salinity and methylviologen (MV), a superoxide radical generating drug, by mediating raffinose accumulation, an osmoprotective substance. The chain is Galactinol synthase 1 (GOLS1) from Arabidopsis thaliana (Mouse-ear cress).